The sequence spans 534 residues: Coiled-coil domain-containing protein 183 (534 aa).

Coiled coils occupy residues 10–54 (EAQI…NLRR), 136–209 (DATK…DMTV), and 321–406 (RFLA…LLVI).

This is Coiled-coil domain-containing protein 183 (Ccdc183) from Mus musculus (Mouse).